The chain runs to 360 residues: Homeobox-leucine zipper protein HOX21 (360 aa).

Disordered regions lie at residues glutamine 25 to glutamine 75 and methionine 88 to arginine 126. Residues histidine 36–leucine 55 show a composition bias toward basic residues. The span at glycine 56–proline 68 shows a compositional bias: pro residues. Gly residues predominate over residues glycine 97–glycine 109. A DNA-binding region (homeobox) is located at residues alanine 121–glutamine 180. The tract at residues lysine 179–serine 223 is leucine-zipper. Disordered regions lie at residues glutamate 233 to glycine 278 and glycine 299 to glutamine 328. A compositionally biased stretch (polar residues) spans alanine 234–isoleucine 246.

It belongs to the HD-ZIP homeobox family. Class I subfamily. Expressed in seedlings, roots, stems, leaf blades and panicles.

It localises to the nucleus. In terms of biological role, probable transcription factor. This Oryza sativa subsp. indica (Rice) protein is Homeobox-leucine zipper protein HOX21 (HOX21).